The primary structure comprises 202 residues: Small ribosomal subunit protein uS4 (202 aa).

An S4 RNA-binding domain is found at 91 to 168 (SRLSSVLYNS…QKVPDYLEVD (78 aa)).

This sequence belongs to the universal ribosomal protein uS4 family. As to quaternary structure, part of the 30S ribosomal subunit. Contacts protein S5. The interaction surface between S4 and S5 is involved in control of translational fidelity.

Its function is as follows. One of the primary rRNA binding proteins, it binds directly to 16S rRNA where it nucleates assembly of the body of the 30S subunit. Functionally, with S5 and S12 plays an important role in translational accuracy. The sequence is that of Small ribosomal subunit protein uS4 from Ehrlichia chaffeensis (strain ATCC CRL-10679 / Arkansas).